The primary structure comprises 355 residues: Probable butyrate kinase (355 aa).

This sequence belongs to the acetokinase family.

It is found in the cytoplasm. The catalysed reaction is butanoate + ATP = butanoyl phosphate + ADP. This Listeria monocytogenes serovar 1/2a (strain ATCC BAA-679 / EGD-e) protein is Probable butyrate kinase.